The following is a 458-amino-acid chain: Cysteine protease ATG4C (458 aa).

Met1 bears the N-acetylmethionine mark. Residue Cys111 is the Nucleophile of the active site. Residues Asp345 and His347 contribute to the active site. Residue Ser451 is modified to Phosphoserine. Thr452 is modified (phosphothreonine).

The protein belongs to the peptidase C54 family.

It is found in the cytoplasm. It carries out the reaction [protein]-C-terminal L-amino acid-glycyl-phosphatidylethanolamide + H2O = [protein]-C-terminal L-amino acid-glycine + a 1,2-diacyl-sn-glycero-3-phosphoethanolamine. Its activity is regulated as follows. Inhibited by N-ethylmaleimide. Its function is as follows. Cysteine protease that plays a key role in autophagy by mediating both proteolytic activation and delipidation of ATG8 family proteins. The protease activity is required for proteolytic activation of ATG8 family proteins: cleaves the C-terminal amino acid of ATG8 proteins MAP1LC3 and GABARAPL2, to reveal a C-terminal glycine. Exposure of the glycine at the C-terminus is essential for ATG8 proteins conjugation to phosphatidylethanolamine (PE) and insertion to membranes, which is necessary for autophagy. In addition to the protease activity, also mediates delipidation of ATG8 family proteins. Catalyzes delipidation of PE-conjugated forms of ATG8 proteins during macroautophagy. Compared to ATG4B, the major protein for proteolytic activation of ATG8 proteins, shows weaker ability to cleave the C-terminal amino acid of ATG8 proteins, while it displays stronger delipidation activity. In contrast to other members of the family, weakly or not involved in phagophore growth during mitophagy. The protein is Cysteine protease ATG4C of Mus musculus (Mouse).